A 535-amino-acid chain; its full sequence is Phosphoenolpyruvate carboxykinase (ATP) (535 aa).

Substrate is bound by residues Arg59, Tyr201, and Lys207. ATP-binding positions include Lys207, His226, and Gly243–Thr251. Mn(2+)-binding residues include Lys207 and His226. Asp264 contributes to the Mn(2+) binding site. ATP is bound by residues Glu292, Arg328, Arg444–Ile445, and Thr450. Arg328 is a substrate binding site.

Belongs to the phosphoenolpyruvate carboxykinase (ATP) family. Requires Mn(2+) as cofactor.

It localises to the cytoplasm. It carries out the reaction oxaloacetate + ATP = phosphoenolpyruvate + ADP + CO2. It participates in carbohydrate biosynthesis; gluconeogenesis. In terms of biological role, involved in the gluconeogenesis. Catalyzes the conversion of oxaloacetate (OAA) to phosphoenolpyruvate (PEP) through direct phosphoryl transfer between the nucleoside triphosphate and OAA. In Parabacteroides distasonis (strain ATCC 8503 / DSM 20701 / CIP 104284 / JCM 5825 / NCTC 11152), this protein is Phosphoenolpyruvate carboxykinase (ATP).